An 837-amino-acid polypeptide reads, in one-letter code: Phosphatidylethanolamine N-methyltransferase (837 aa).

Topologically, residues 1-36 (MASDVVARTRSSGVTFTPPTTHDMVRSLFDPTVRKS) are lumenal. A helical membrane pass occupies residues 37–57 (FLEICITLALLSDFVFCYWGL). At 58-67 (QRFGLTSMKK) the chain is on the cytoplasmic side. Residues 68 to 88 (AFLAQYLFWRLCYNLGIGVAL) form a helical membrane-spanning segment. Topologically, residues 89 to 148 (HLQSRYETWTNYAKRNHVFTKGNHTPLARFCQFELKTKMSEGYDMYSQPEELNVWLLFRQ) are lumenal. A helical transmembrane segment spans residues 149–169 (FVDLILMQDFCTYMIYVYLSL). Topologically, residues 170 to 173 (PAQW) are cytoplasmic. A helical transmembrane segment spans residues 174–194 (SAMLNWRTGLGVSMILFNIWV). The Lumenal portion of the chain corresponds to 195–205 (KVDAHRVVKDY). The helical transmembrane segment at 206 to 226 (AWYWGDFFFLQESELVFDGVF) threads the bilayer. At 227–235 (NISPHPMYS) the chain is on the cytoplasmic side. Residues 236–256 (IGYMGYYGLSLICGNYHVLLV) form a helical membrane-spanning segment. At 257-322 (SISGHLLQFL…SGFWVNNFDK (66 aa)) the chain is on the lumenal side. The chain crosses the membrane as a helical span at residues 323–343 (LRFTDYFTVGTSLALICWLFL). The Cytoplasmic portion of the chain corresponds to 344–349 (ERPSVK). A helical membrane pass occupies residues 350–370 (LLFNLTFFTKFVTSIVVCSIL). Over 371 to 396 (YLQSSQKWFTKLYLKNGYTQVYSYQQ) the chain is Lumenal. Residues 397-417 (WQFIYNFSSCLTYTLLFIQTL) traverse the membrane as a helical segment. The Cytoplasmic portion of the chain corresponds to 418–424 (AKLFDDN). The helical transmembrane segment at 425-445 (TYIEYTQFIFGLLLCAVQTWC) threads the bilayer. Over 446–505 (NAEIRSAISDFGWFYGDFFLSNYIPTKSLTSHGIYRYLNNPETILGVAGVWGTVLMTDFS) the chain is Lumenal. A helical membrane pass occupies residues 506–526 (WENIALACLWSGCNFIIVKFI). The Cytoplasmic portion of the chain corresponds to 527–837 (EQPHMAKLYG…HIKKVLDDLE (311 aa)).

This sequence belongs to the class VI-like SAM-binding methyltransferase superfamily. CHO2 family.

Its subcellular location is the endoplasmic reticulum membrane. It carries out the reaction a 1,2-diacyl-sn-glycero-3-phosphoethanolamine + S-adenosyl-L-methionine = a 1,2-diacyl-sn-glycero-3-phospho-N-methylethanolamine + S-adenosyl-L-homocysteine + H(+). Its pathway is phospholipid metabolism; phosphatidylcholine biosynthesis. Catalyzes the first step of the methylation pathway of phosphatidylcholine biosynthesis, the SAM-dependent methylation of phosphatidylethanolamine (PE) to phosphatidylmonomethylethanolamine (PMME). The protein is Phosphatidylethanolamine N-methyltransferase (CHO2) of Zygosaccharomyces rouxii (strain ATCC 2623 / CBS 732 / NBRC 1130 / NCYC 568 / NRRL Y-229).